A 481-amino-acid polypeptide reads, in one-letter code: Proline--tRNA ligase 2 (481 aa).

Belongs to the class-II aminoacyl-tRNA synthetase family. ProS type 3 subfamily. Homodimer.

It is found in the cytoplasm. The catalysed reaction is tRNA(Pro) + L-proline + ATP = L-prolyl-tRNA(Pro) + AMP + diphosphate. In terms of biological role, catalyzes the attachment of proline to tRNA(Pro) in a two-step reaction: proline is first activated by ATP to form Pro-AMP and then transferred to the acceptor end of tRNA(Pro). This chain is Proline--tRNA ligase 2, found in Clostridioides difficile (strain 630) (Peptoclostridium difficile).